An 848-amino-acid chain; its full sequence is Neurofilament medium polypeptide (848 aa).

Over residues 1-10 (MSYTLDSLGN) the composition is skewed to polar residues. Residues 1–51 (MSYTLDSLGNPSAYRRVTETRSSFSRVSGSPSSGFRSQSWSRGSPSTVSSS) form a disordered region. S2 carries the post-translational modification N-acetylserine. Positions 2 to 102 (SYTLDSLGNP…KLSRSNEKEQ (101 aa)) are head. The segment covering 21 to 44 (RSSFSRVSGSPSSGFRSQSWSRGS) has biased composition (low complexity). A Phosphoserine modification is found at S30. R42 is subject to Omega-N-methylarginine. O-linked (GlcNAc) threonine glycosylation occurs at T47. A Phosphoserine modification is found at S97. Residues 99–410 (EKEQLQGLND…KLLEGEETRF (312 aa)) enclose the IF rod domain. Residues 103 to 134 (LQGLNDRFAGYIEKVHYLEQQNKEIEAEIQAL) are coil 1A. The interval 135–147 (RQKQASHAQLGDA) is linker 1. Residues 148 to 246 (YDQEIRELRA…EEEVADLLAQ (99 aa)) are coil 1B. S224 carries the phosphoserine modification. Positions 247–263 (IQASHITVERKDYLKTD) are linker 12. The interval 264–285 (ISTALKEIRSQLECHSDQNMHQ) is coil 2A. Residues 286 to 289 (AEEW) are linker 2. The tract at residues 290 to 410 (FKCRYAKLTE…KLLEGEETRF (121 aa)) is coil 2B. Phosphotyrosine is present on Y318. Phosphoserine occurs at positions 344, 416, and 428. The tail stretch occupies residues 411 to 848 (STFSGSITGP…AIVKEVTQGD (438 aa)). T430 carries an O-linked (GlcNAc) threonine glycan. 2 positions are modified to phosphoserine: S466 and S482. Residues 482 to 785 (SAKEEKEEAE…GEDSSDDKVV (304 aa)) form a disordered region. Residues 488–498 (EEAEEKEEEPE) are compositionally biased toward acidic residues. The segment covering 499–509 (AEKSPVKSPEA) has biased composition (basic and acidic residues). A phosphoserine mark is found at S502 and S506. The segment covering 510–533 (KEEEEEGEKEEEEEGQEEEEEEDE) has biased composition (acidic residues). The span at 534–553 (GVKSDQAEEGGSEKEGSSEK) shows a compositional bias: basic and acidic residues. Phosphoserine is present on residues S537, S545, S550, and S551. Positions 554–576 (DEGEQEEEEGETEAEGEGEEAEA) are enriched in acidic residues. Phosphothreonine is present on T565. The span at 577–604 (KEEKKIEGKVEEVAVKEEIKVEKPEKAK) shows a compositional bias: basic and acidic residues. 2 positions are modified to phosphoserine: S605 and S610. Basic and acidic residues-rich tracts occupy residues 611-677 (PVEE…KAVE) and 689-711 (SLEK…KAEE). The residue at position 642 (T642) is a Phosphothreonine. Phosphoserine occurs at positions 645, 669, 689, 715, 723, 753, and 769. Composition is skewed to basic and acidic residues over residues 720–732 (SDRS…KEDI) and 748–760 (TQEK…EEKG). Residues 771 to 785 (AEEKKGEDSSDDKVV) show a composition bias toward basic and acidic residues.

The protein belongs to the intermediate filament family. As to quaternary structure, forms heterodimers with NEFL; which can further hetero-oligomerize (in vitro). Forms heterodimers with INA (in vitro). There are a number of repeats of the tripeptide K-S-P, NFM is phosphorylated on a number of the serines in this motif. It is thought that phosphorylation of NFM results in the formation of interfilament cross bridges that are important in the maintenance of axonal caliber. Post-translationally, phosphorylation seems to play a major role in the functioning of the larger neurofilament polypeptides (NF-M and NF-H), the levels of phosphorylation being altered developmentally and coincidentally with a change in the neurofilament function. In terms of processing, phosphorylated in the head and rod regions by the PKC kinase PKN1, leading to the inhibition of polymerization. Expressed in the sciatic nerve (at protein level).

Its subcellular location is the cytoplasm. The protein resides in the cytoskeleton. It is found in the cell projection. The protein localises to the axon. Neurofilaments usually contain three intermediate filament proteins: NEFL, NEFM, and NEFH which are involved in the maintenance of neuronal caliber. May additionally cooperate with the neuronal intermediate filament proteins PRPH and INA to form neuronal filamentous networks. The protein is Neurofilament medium polypeptide (Nefm) of Mus musculus (Mouse).